Reading from the N-terminus, the 205-residue chain is Protease (205 aa).

Residues His-54, Asp-71, and Cys-120 contribute to the active site.

It belongs to the peptidase C5 family. As to quaternary structure, interacts with protease cofactor pVI-C; this interaction is necessary for protease activation.

Its subcellular location is the virion. It is found in the host nucleus. The catalysed reaction is Cleaves proteins of the adenovirus and its host cell at two consensus sites: -Yaa-Xaa-Gly-Gly-|-Xaa- and -Yaa-Xaa-Gly-Xaa-|-Gly- (in which Yaa is Met, Ile or Leu, and Xaa is any amino acid).. Requires DNA and protease cofactor for maximal activation. Inside nascent virions, becomes partially activated by binding to the viral DNA, allowing it to cleave the cofactor that binds to the protease and fully activates it. Actin, like the viral protease cofactor, seems to act as a cofactor in the cleavage of cytokeratin 18 and of actin itself. Cleaves viral precursor proteins (pTP, pIIIa, pVI, pVII, pVIII, and pX) inside newly assembled particles giving rise to mature virions. Protease complexed to its cofactor slides along the viral DNA to specifically locate and cleave the viral precursors. Mature virions have a weakened organization compared to the unmature virions, thereby facilitating subsequent uncoating. Without maturation, the particle lacks infectivity and is unable to uncoat. Late in adenovirus infection, in the cytoplasm, may participate in the cytoskeleton destruction. Cleaves host cell cytoskeletal keratins K7 and K18. This chain is Protease, found in Bos taurus (Bovine).